A 258-amino-acid polypeptide reads, in one-letter code: Imidazole glycerol phosphate synthase subunit HisF (258 aa).

Residues aspartate 11 and aspartate 130 contribute to the active site.

The protein belongs to the HisA/HisF family. Heterodimer of HisH and HisF.

The protein localises to the cytoplasm. It catalyses the reaction 5-[(5-phospho-1-deoxy-D-ribulos-1-ylimino)methylamino]-1-(5-phospho-beta-D-ribosyl)imidazole-4-carboxamide + L-glutamine = D-erythro-1-(imidazol-4-yl)glycerol 3-phosphate + 5-amino-1-(5-phospho-beta-D-ribosyl)imidazole-4-carboxamide + L-glutamate + H(+). The protein operates within amino-acid biosynthesis; L-histidine biosynthesis; L-histidine from 5-phospho-alpha-D-ribose 1-diphosphate: step 5/9. Its function is as follows. IGPS catalyzes the conversion of PRFAR and glutamine to IGP, AICAR and glutamate. The HisF subunit catalyzes the cyclization activity that produces IGP and AICAR from PRFAR using the ammonia provided by the HisH subunit. The protein is Imidazole glycerol phosphate synthase subunit HisF of Salmonella agona (strain SL483).